Here is a 495-residue protein sequence, read N- to C-terminus: Ectonucleoside triphosphate diphosphohydrolase 2 (495 aa).

At 1–7 the chain is on the cytoplasmic side; sequence MAGKVRS. Residues 8 to 28 form a helical membrane-spanning segment; that stretch reads LLPPLLLAAAGLAGLLLLCVP. At 29-462 the chain is on the extracellular side; that stretch reads TRDVREPPAL…PGLRKGTDFS (434 aa). N64 carries an N-linked (GlcNAc...) asparagine glycan. C75 and C99 form a disulfide bridge. N129 carries N-linked (GlcNAc...) asparagine glycosylation. The Proton acceptor role is filled by E165. 204–208 is an ATP binding site; sequence GASTQ. 4 disulfides stabilise this stretch: C242–C284, C265–C310, C323–C328, and C377–C399. The N-linked (GlcNAc...) asparagine glycan is linked to N294. N-linked (GlcNAc...) asparagine glycans are attached at residues N378 and N443. Residues 463–483 form a helical membrane-spanning segment; sequence SWVVLLLLFASALLAALVLLL. Residues 484–495 lie on the Cytoplasmic side of the membrane; it reads RQVHSAKLPSTI.

This sequence belongs to the GDA1/CD39 NTPase family. It depends on Ca(2+) as a cofactor. Mg(2+) serves as cofactor. Brain, placenta, skeletal muscle, kidney, pancreas, heart, ovary, testis, colon, small intestine, prostate and pancreas. No expression in adult thymus, spleen, lung, liver and peripheral blood leukocytes.

It is found in the cell membrane. Its subcellular location is the endoplasmic reticulum membrane. Functionally, in the nervous system, could hydrolyze ATP and other nucleotides to regulate purinergic neurotransmission. Hydrolyzes ADP only to a marginal extent. The order of activity with different substrates is ATP &gt; GTP &gt; CTP = ITP &gt; UTP &gt;&gt; ADP = UDP. This is Ectonucleoside triphosphate diphosphohydrolase 2 (ENTPD2) from Homo sapiens (Human).